We begin with the raw amino-acid sequence, 374 residues long: Mannitol-1-phosphate 5-dehydrogenase (374 aa).

3-14 (AVHFGAGNIGRG) lines the NAD(+) pocket.

It belongs to the mannitol dehydrogenase family.

It carries out the reaction D-mannitol 1-phosphate + NAD(+) = beta-D-fructose 6-phosphate + NADH + H(+). The protein is Mannitol-1-phosphate 5-dehydrogenase of Shouchella clausii (strain KSM-K16) (Alkalihalobacillus clausii).